We begin with the raw amino-acid sequence, 263 residues long: Putative methyltransferase DDB_G0268948 (263 aa).

Belongs to the methyltransferase superfamily.

The polypeptide is Putative methyltransferase DDB_G0268948 (Dictyostelium discoideum (Social amoeba)).